The primary structure comprises 362 residues: Protein RecA (362 aa).

77-84 lines the ATP pocket; that stretch reads GPESSGKT.

This sequence belongs to the RecA family.

The protein localises to the cytoplasm. In terms of biological role, can catalyze the hydrolysis of ATP in the presence of single-stranded DNA, the ATP-dependent uptake of single-stranded DNA by duplex DNA, and the ATP-dependent hybridization of homologous single-stranded DNAs. It interacts with LexA causing its activation and leading to its autocatalytic cleavage. The sequence is that of Protein RecA from Rhizobium etli (strain CIAT 652).